The chain runs to 316 residues: Pleckstrin homology domain-containing family F member 1 homolog (316 aa).

Residues 35-131 enclose the PH domain; the sequence is VLVGEGVLTK…WMAHINKCVE (97 aa). The segment at 152-212 adopts an FYVE-type zinc-finger fold; it reads DTDASVCMHC…VCDACYERLK (61 aa). Residues Cys-158, Cys-161, Cys-175, Cys-178, Cys-183, Cys-186, Cys-204, and Cys-207 each coordinate Zn(2+). The segment at 215–316 is disordered; the sequence is PSSLGSGEDS…AAVATTGSHC (102 aa). The segment covering 244–253 has biased composition (acidic residues); sequence SNDEDSDEET. The span at 279-292 shows a compositional bias: low complexity; sequence SSTITSPSSATTGS. Polar residues predominate over residues 298–316; that stretch reads VTPSVQSSPAAVATTGSHC.

Interacts with Gdi (Rab GDP dissociation inhibitor). In terms of tissue distribution, in ovaries, expressed both in the germ line cells and in the overlying somatic follicular epithelium.

The protein resides in the apical cell membrane. Its subcellular location is the endosome membrane. It is found in the cytoplasm. It localises to the cell cortex. Its function is as follows. Functions in the regulation of endosome morphology and late endosome formation. Has a role in controlling trafficking from early to late endosomes and from late endosomes to lysosomes. Important for localization of Gdi to the endosomal membranes. May function in controlling the activity of multiple regulators in the endocytic pathway, perhaps by positively controlling those involved in the early steps of endocytosis such as Rab5 and hrs, and negative regulating those involved in the late stages of endocytosis like car and VhaSFD. This chain is Pleckstrin homology domain-containing family F member 1 homolog, found in Drosophila melanogaster (Fruit fly).